A 427-amino-acid chain; its full sequence is MTTAPAISSRLDDPESARETGRAKIDWAFEHMPILSALREEFDANQPLAGETIGMAMHVEAKTAALVETMADAGAEIAITGCNPLSTHDGVSAALDAHESITSYAERGAEGEAYYDAIDAVLAHEPTVTVDDGGDLVFRVHEDHPELIDTIIGGTEETTTGVHRLRAMDDDDALEYPVFAVNDTPMKRLFDNVHGTGESALANIAMTTNLSWAGKDVVVAGYGDCGRGVAKKAAGQNANVIVTEVEPRRALEAHMEGYDVMPMAEAAEVGDVFLTTTGNKNVITRAHFERMDDGVVLANAGHFDVEVNLDHLSELAVSEREAREGVREYELADGRRLNVLAEGRLVNLASPIGLGHPVGVMDQSFGVQAVCVRELVANREEYAAGVHNVPDELDIEIAEIKLAAEGVEYDALTDDQAEYMDSWQHGT.

Residues aspartate 132 and glutamate 157 each contribute to the substrate site. 158 to 160 (TTT) is an NAD(+) binding site. Substrate is bound by residues lysine 187 and aspartate 191. Residues asparagine 192, 221 to 226 (GYGDCG), glutamate 244, asparagine 279, 300 to 302 (AGH), and asparagine 347 each bind NAD(+).

It belongs to the adenosylhomocysteinase family. Requires NAD(+) as cofactor.

It is found in the cytoplasm. It carries out the reaction S-adenosyl-L-homocysteine + H2O = L-homocysteine + adenosine. It functions in the pathway amino-acid biosynthesis; L-homocysteine biosynthesis; L-homocysteine from S-adenosyl-L-homocysteine: step 1/1. May play a key role in the regulation of the intracellular concentration of adenosylhomocysteine. This is Adenosylhomocysteinase from Halobacterium salinarum (strain ATCC 29341 / DSM 671 / R1).